A 104-amino-acid polypeptide reads, in one-letter code: ATP-dependent Clp protease adapter protein ClpS (104 aa).

The protein belongs to the ClpS family. Binds to the N-terminal domain of the chaperone ClpA.

In terms of biological role, involved in the modulation of the specificity of the ClpAP-mediated ATP-dependent protein degradation. The chain is ATP-dependent Clp protease adapter protein ClpS from Hydrogenovibrio crunogenus (strain DSM 25203 / XCL-2) (Thiomicrospira crunogena).